The chain runs to 311 residues: Porphobilinogen deaminase (311 aa).

Cys-241 is modified (S-(dipyrrolylmethanemethyl)cysteine).

It belongs to the HMBS family. Monomer. Dipyrromethane serves as cofactor.

The enzyme catalyses 4 porphobilinogen + H2O = hydroxymethylbilane + 4 NH4(+). Its pathway is porphyrin-containing compound metabolism; protoporphyrin-IX biosynthesis; coproporphyrinogen-III from 5-aminolevulinate: step 2/4. In terms of biological role, tetrapolymerization of the monopyrrole PBG into the hydroxymethylbilane pre-uroporphyrinogen in several discrete steps. This chain is Porphobilinogen deaminase, found in Geobacillus sp. (strain WCH70).